A 229-amino-acid polypeptide reads, in one-letter code: Large ribosomal subunit protein uL1 (229 aa).

As to quaternary structure, part of the 50S ribosomal subunit.

In terms of biological role, directly binds to 23S rRNA. Forms what is known as the L1 stalk, which protrudes beyond the 70S ribosome surface. The stalk is preferentially stabilized in 70S versus 50S crystals. Interacts with the E site tRNA, blocking the exit path. This blockage implies that this section of the ribosome must be able to move to release the deacetylated tRNA. Its function is as follows. Protein L1 is also a translational repressor protein, it controls the translation of the L11 operon by binding to its mRNA. This chain is Large ribosomal subunit protein uL1 (rplA), found in Thermus thermophilus (strain ATCC 27634 / DSM 579 / HB8).